Reading from the N-terminus, the 521-residue chain is Bifunctional purine biosynthesis protein PurH (521 aa).

The region spanning 1-147 (MAKISRALIS…KNNADVTVLV (147 aa)) is the MGS-like domain.

Belongs to the PurH family.

The enzyme catalyses (6R)-10-formyltetrahydrofolate + 5-amino-1-(5-phospho-beta-D-ribosyl)imidazole-4-carboxamide = 5-formamido-1-(5-phospho-D-ribosyl)imidazole-4-carboxamide + (6S)-5,6,7,8-tetrahydrofolate. It carries out the reaction IMP + H2O = 5-formamido-1-(5-phospho-D-ribosyl)imidazole-4-carboxamide. It functions in the pathway purine metabolism; IMP biosynthesis via de novo pathway; 5-formamido-1-(5-phospho-D-ribosyl)imidazole-4-carboxamide from 5-amino-1-(5-phospho-D-ribosyl)imidazole-4-carboxamide (10-formyl THF route): step 1/1. The protein operates within purine metabolism; IMP biosynthesis via de novo pathway; IMP from 5-formamido-1-(5-phospho-D-ribosyl)imidazole-4-carboxamide: step 1/1. The sequence is that of Bifunctional purine biosynthesis protein PurH from Geotalea daltonii (strain DSM 22248 / JCM 15807 / FRC-32) (Geobacter daltonii).